Here is a 182-residue protein sequence, read N- to C-terminus: Large ribosomal subunit protein uL6 (182 aa).

It belongs to the universal ribosomal protein uL6 family. As to quaternary structure, part of the 50S ribosomal subunit.

Its function is as follows. This protein binds to the 23S rRNA, and is important in its secondary structure. It is located near the subunit interface in the base of the L7/L12 stalk, and near the tRNA binding site of the peptidyltransferase center. This is Large ribosomal subunit protein uL6 from Nostoc sp. (strain PCC 7120 / SAG 25.82 / UTEX 2576).